Here is a 125-residue protein sequence, read N- to C-terminus: Oxytocin-neurophysin 1 (125 aa).

The signal sequence occupies residues 1 to 19; the sequence is MACPSLACCLLGLLALTSA. The cysteines at positions 20 and 25 are disulfide-linked. At Gly-28 the chain carries Glycine amide. Disulfide bonds link Cys-41–Cys-85, Cys-44–Cys-58, Cys-52–Cys-75, Cys-59–Cys-65, Cys-92–Cys-104, Cys-98–Cys-116, and Cys-105–Cys-110.

It belongs to the vasopressin/oxytocin family. In terms of assembly, interacts with oxytocin receptor (Ki=1.5 nM). Interacts with vasopressin V1aR/AVPR1A (Ki=37 nM), V1bR/AVPR1B (Ki=222 nM), and V2R/AVPR2 receptors (Ki=823 nM).

Functionally, neurophysin 1 specifically binds oxytocin. In terms of biological role, oxytocin causes contraction of the smooth muscle of the uterus and of the mammary gland. Acts by binding to oxytocin receptor (OXTR). The protein is Oxytocin-neurophysin 1 (Oxt) of Rattus norvegicus (Rat).